The following is a 218-amino-acid chain: Small ribosomal subunit protein uS3c (218 aa).

One can recognise a KH type-2 domain in the interval 47 to 118; it reads VQKNIRISSG…KLNIAITRIS (72 aa).

Belongs to the universal ribosomal protein uS3 family. As to quaternary structure, part of the 30S ribosomal subunit.

It is found in the plastid. It localises to the chloroplast. The chain is Small ribosomal subunit protein uS3c (rps3) from Crucihimalaya wallichii (Rock-cress).